A 225-amino-acid chain; its full sequence is Cytidylate kinase (225 aa).

Residue 10-18 participates in ATP binding; sequence GPASSGKST.

This sequence belongs to the cytidylate kinase family. Type 1 subfamily.

The protein localises to the cytoplasm. The enzyme catalyses CMP + ATP = CDP + ADP. It catalyses the reaction dCMP + ATP = dCDP + ADP. The protein is Cytidylate kinase of Streptococcus gordonii (strain Challis / ATCC 35105 / BCRC 15272 / CH1 / DL1 / V288).